Consider the following 136-residue polypeptide: Probable flagellum biosynthesis repressor protein FlbT 2 (136 aa).

The protein belongs to the FlbT family.

Has a post-transcriptional repressor function in flagellum biogenesis. Associates with the 5'-UTR of fljK mRNA and promotes its degradation. The protein is Probable flagellum biosynthesis repressor protein FlbT 2 of Bradyrhizobium diazoefficiens (strain JCM 10833 / BCRC 13528 / IAM 13628 / NBRC 14792 / USDA 110).